The following is a 98-amino-acid chain: MKTIFVFLTLAVLVSSFFKKLFLRASNIMIKSISEGKSQFSGPALSPNIDPADEHIGHSPEDMKIIFCQQCAFHCIEKKKNIAHCENSICRCTLEDIL.

An N-terminal signal peptide occupies residues 1–16 (MKTIFVFLTLAVLVSS). Intrachain disulfides connect Cys-68-Cys-85, Cys-71-Cys-90, and Cys-75-Cys-92.

It belongs to the DEFL family.

It localises to the secreted. The chain is Defensin-like protein 219 from Arabidopsis thaliana (Mouse-ear cress).